The primary structure comprises 81 residues: ATP synthase subunit c (81 aa).

Transmembrane regions (helical) follow at residues 5–25 and 57–77; these read IAAG…IGAG and VGLV…FVFA.

The protein belongs to the ATPase C chain family. F-type ATPases have 2 components, F(1) - the catalytic core - and F(0) - the membrane proton channel. F(1) has five subunits: alpha(3), beta(3), gamma(1), delta(1), epsilon(1). F(0) has three main subunits: a(1), b(2) and c(10-14). The alpha and beta chains form an alternating ring which encloses part of the gamma chain. F(1) is attached to F(0) by a central stalk formed by the gamma and epsilon chains, while a peripheral stalk is formed by the delta and b chains.

The protein resides in the cell membrane. In terms of biological role, f(1)F(0) ATP synthase produces ATP from ADP in the presence of a proton or sodium gradient. F-type ATPases consist of two structural domains, F(1) containing the extramembraneous catalytic core and F(0) containing the membrane proton channel, linked together by a central stalk and a peripheral stalk. During catalysis, ATP synthesis in the catalytic domain of F(1) is coupled via a rotary mechanism of the central stalk subunits to proton translocation. Functionally, key component of the F(0) channel; it plays a direct role in translocation across the membrane. A homomeric c-ring of between 10-14 subunits forms the central stalk rotor element with the F(1) delta and epsilon subunits. The protein is ATP synthase subunit c of Mycobacterium marinum (strain ATCC BAA-535 / M).